The sequence spans 683 residues: Acetyl-coenzyme A synthetase 2 (683 aa).

CoA is bound by residues 206–209 and threonine 325; that span reads RGGK. Residues 401–403 and 425–430 each bind ATP; these read GEP and DTMWQT. Position 425–430 (425–430) interacts with AMP; it reads DTMWQT. Residue lysine 506 forms a Glycyl lysine isopeptide (Lys-Gly) (interchain with G-Cter in ubiquitin) linkage. Residues aspartate 516 and arginine 531 each contribute to the ATP site. Aspartate 516 and arginine 531 together coordinate AMP. Serine 539 is a CoA binding site. Residue arginine 542 coordinates ATP. Arginine 612 is a binding site for CoA. At serine 679 the chain carries Phosphoserine.

Belongs to the ATP-dependent AMP-binding enzyme family.

Its subcellular location is the cytoplasm. It localises to the nucleus. The enzyme catalyses acetate + ATP + CoA = acetyl-CoA + AMP + diphosphate. The protein operates within carbohydrate metabolism; pyruvate metabolism. Functionally, catalyzes the production of acetyl-CoA. Provides the acetyl-CoA source for histone acetylation in the nucleus. 'Anaerobic' isozyme of acetyl-coenzyme A synthetase, which is required for growth on fermentable carbon sources such as glucose. May be involved in the PDH (pyruvate dehydrogenase complex) bypass. This is Acetyl-coenzyme A synthetase 2 from Saccharomyces cerevisiae (strain ATCC 204508 / S288c) (Baker's yeast).